Consider the following 3390-residue polypeptide: Genome polyprotein (3390 aa).

The interaction with host EXOC1 stretch occupies residues 1–15; that stretch reads MNNQRKKTGKPSINM. The Cytoplasmic portion of the chain corresponds to 1-100; the sequence is MNNQRKKTGK…MLSIINKRKK (100 aa). Positions 37-72 are hydrophobic; homodimerization of capsid protein C; it reads LLNGQGPMKLVMAFIAFLRFLAIPPTAGVLARWGTF. Residues 101–114 constitute a propeptide, ER anchor for the capsid protein C, removed in mature form by serine protease NS3; the sequence is TSLCLMMMLPATLA. A helical transmembrane segment spans residues 101–118; sequence TSLCLMMMLPATLAFHLT. At 119-243 the chain is on the extracellular side; sequence SRDGEPRMIV…VEKVETWALR (125 aa). Asparagine 183 carries an N-linked (GlcNAc...) asparagine; by host glycan. Residues 244–264 form a helical membrane-spanning segment; the sequence is HPGFTILALFLAHYIGTSLTQ. Position 265 (lysine 265) is a topological domain, cytoplasmic. A helical membrane pass occupies residues 266-280; it reads VVIFILLMLVTPSMT. Residues 281-723 lie on the Extracellular side of the membrane; that stretch reads MRCVGVGNRD…VHQIFGSAYT (443 aa). Disulfide bonds link cysteine 283–cysteine 310, cysteine 340–cysteine 401, cysteine 354–cysteine 385, and cysteine 372–cysteine 396. Asparagine 347 carries N-linked (GlcNAc...) asparagine; by host glycosylation. Positions 378 to 391 are fusion peptide; it reads DRGWGNGCGLFGKG. Asparagine 433 is a glycosylation site (N-linked (GlcNAc...) asparagine; by host). 2 disulfides stabilise this stretch: cysteine 463–cysteine 563 and cysteine 580–cysteine 611. Residues 724 to 744 form a helical membrane-spanning segment; the sequence is ALFSGVSWIMKIGIGVLLTWI. Residues 745–750 are Cytoplasmic-facing; that stretch reads GLNSKN. Residues 751-771 form a helical membrane-spanning segment; that stretch reads TSMSFSCIAIGIITLYLGVVV. Topologically, residues 772–1193 are extracellular; sequence QADMGCVINW…MIGSNASDRM (422 aa). 6 cysteine pairs are disulfide-bonded: cysteine 777/cysteine 788, cysteine 828/cysteine 916, cysteine 952/cysteine 996, cysteine 1053/cysteine 1102, cysteine 1064/cysteine 1086, and cysteine 1085/cysteine 1089. Asparagine 903 and asparagine 980 each carry an N-linked (GlcNAc...) asparagine; by host glycan. N-linked (GlcNAc...) asparagine; by host glycans are attached at residues asparagine 1132 and asparagine 1188. The chain crosses the membrane as a helical span at residues 1194-1218; that stretch reads GMGVTYLALIATFKIQPFLALGFFL. The Cytoplasmic segment spans residues 1219 to 1224; it reads RKLTSR. A helical membrane pass occupies residues 1225 to 1243; the sequence is ENLLLGVGLAMAATLRLPE. Topologically, residues 1244–1267 are lumenal; sequence DIEQMANGIALGLMALKLITQFET. The chain crosses the membrane as a helical span at residues 1268 to 1288; it reads YQLWTALVSLTCSNTIFTLTV. Position 1289 (alanine 1289) is a topological domain, cytoplasmic. Residues 1290 to 1308 form a helical membrane-spanning segment; sequence WRTATLILAGISLLPVCQS. Over 1309-1315 the chain is Lumenal; it reads SSMRKTD. The helical transmembrane segment at 1316–1336 threads the bilayer; sequence WLPMTVAAMGVPPLPLFIFSL. The Cytoplasmic portion of the chain corresponds to 1337–1344; that stretch reads KDTLKRRS. The chain crosses the membrane as a helical span at residues 1345-1365; sequence WPLNEGVMAVGLVSILASSLL. Residues 1366-1368 lie on the Lumenal side of the membrane; sequence RND. A helical transmembrane segment spans residues 1369–1389; the sequence is VPMAGPLVAGGLLIACYVITG. The Cytoplasmic portion of the chain corresponds to 1390–1443; it reads TSADLTVEKAADVTWEEEAEQTGVSHNLMITVDDDGTMRIKDDETENILTVLLK. The interacts with and activates NS3 protease stretch occupies residues 1396–1435; it reads VEKAADVTWEEEAEQTGVSHNLMITVDDDGTMRIKDDETE. The helical intramembrane region spans 1444 to 1464; that stretch reads TALLIVSGIFPCSIPATLLVW. At 1465–2146 the chain is on the cytoplasmic side; sequence HTWQKQTQRS…VEELPETMET (682 aa). Residues 1474–1651 form the Peptidase S7 domain; it reads SGVLWDVPSP…NAEPDGPTPE (178 aa). Active-site charge relay system; for serine protease NS3 activity residues include histidine 1524, aspartate 1548, and serine 1608. Positions 1654-1810 constitute a Helicase ATP-binding domain; it reads EEMFKKRNLT…QSNAPIQDEE (157 aa). The tract at residues 1658-1661 is important for RNA-binding; the sequence is KKRN. 1667–1674 serves as a coordination point for ATP; the sequence is LHPGSGKT. The DEAH box motif lies at 1758–1761; that stretch reads DEAH. The Helicase C-terminal domain occupies 1821-1986; that stretch reads GNEWITDFVG…GIIPALFEPE (166 aa). The residue at position 1862 (lysine 1862) is an N6-acetyllysine; by host. A helical membrane pass occupies residues 2147-2167; it reads LLLLGLMILLTGGAMLFLISG. Residues 2168–2169 are Lumenal-facing; that stretch reads KG. The segment at residues 2170–2190 is an intramembrane region (helical); that stretch reads IGKTSIGLICVIASSGMLWMA. Residue aspartate 2191 is a topological domain, lumenal. The helical transmembrane segment at 2192-2212 threads the bilayer; it reads VPLQWIASAIVLEFFMMVLLI. The Cytoplasmic segment spans residues 2213–2227; that stretch reads PEPEKQRTPQDNQLA. The chain crosses the membrane as a helical span at residues 2228–2248; that stretch reads YVVIGILTLAAIVAANEMGLL. Topologically, residues 2249-2273 are lumenal; the sequence is ETTKRDLGMSKEPGVVSPTSYLDVD. The segment at residues 2274-2294 is an intramembrane region (helical); it reads LHPASAWTLYAVATTVITPML. Over 2295–2305 the chain is Lumenal; the sequence is RHTIENSTANV. N-linked (GlcNAc...) asparagine; by host glycans are attached at residues asparagine 2300 and asparagine 2304. An intramembrane region (helical) is located at residues 2306–2326; the sequence is SLAAIANQAVVLMGLDKGWPI. The Lumenal portion of the chain corresponds to 2327 to 2346; sequence SKMDLGVPLLALGCYSQVNP. Residues 2347 to 2367 form a helical membrane-spanning segment; that stretch reads LTLIAAVLLLVTHYAIIGPGL. The Cytoplasmic segment spans residues 2368-2412; that stretch reads QAKATREAQKRTAAGIMKNPTVDGIMTIDLDPVIYDSKFEKQLGQ. A helical membrane pass occupies residues 2413-2433; sequence VMLLVLCAVQLLLMRTSWALC. Residues 2434 to 2458 are Lumenal-facing; that stretch reads EVLTLATGPITTLWEGSPGKFWNTT. N-linked (GlcNAc...) asparagine; by host glycosylation is present at asparagine 2456. Residues 2459 to 2479 form a helical membrane-spanning segment; that stretch reads IAVSMANIFRGSYLAGAGLAF. Residues 2480–3390 are Cytoplasmic-facing; it reads SIMKSVGTGK…KEEESEGAIW (911 aa). The mRNA cap 0-1 NS5-type MT domain maps to 2492–2753; that stretch reads TGSQGETLGE…DVDLGAGTRH (262 aa). Serine 2546 is an S-adenosyl-L-methionine binding site. Serine 2546 is subject to Phosphoserine. Lysine 2551 serves as the catalytic For 2'-O-MTase activity. The SUMO-interacting motif motif lies at 2567-2570; the sequence is VIDL. The S-adenosyl-L-methionine site is built by glycine 2576, tryptophan 2577, threonine 2594, lysine 2595, aspartate 2621, and valine 2622. The active-site For 2'-O-MTase activity is the aspartate 2636. Isoleucine 2637 contributes to the S-adenosyl-L-methionine binding site. Catalysis depends on for 2'-O-MTase activity residues lysine 2670 and glutamate 2706. S-adenosyl-L-methionine is bound at residue tyrosine 2708. Zn(2+) is bound by residues glutamate 2927, histidine 2931, cysteine 2936, and cysteine 2939. Residues 3018 to 3168 enclose the RdRp catalytic domain; sequence AMYADDTAGW…PIDDRFANAL (151 aa). The Zn(2+) site is built by histidine 3202, cysteine 3218, and cysteine 3337.

The protein in the N-terminal section; belongs to the class I-like SAM-binding methyltransferase superfamily. mRNA cap 0-1 NS5-type methyltransferase family. As to quaternary structure, homodimer. Interacts (via N-terminus) with host EXOC1 (via C-terminus); this interaction results in EXOC1 degradation through the proteasome degradation pathway. In terms of assembly, forms heterodimers with envelope protein E in the endoplasmic reticulum and Golgi. Homodimer; in the endoplasmic reticulum and Golgi. Interacts with protein prM. Interacts with non-structural protein 1. As to quaternary structure, homodimer; Homohexamer when secreted. Interacts with envelope protein E. In terms of assembly, interacts (via N-terminus) with serine protease NS3. Forms a heterodimer with serine protease NS3. May form homooligomers. As to quaternary structure, forms a heterodimer with NS2B. Interacts with NS4B. Interacts with unphosphorylated RNA-directed RNA polymerase NS5; this interaction stimulates RNA-directed RNA polymerase NS5 guanylyltransferase activity. In terms of assembly, interacts with host MAVS; this interaction inhibits the synthesis of IFN-beta. Interacts with host AUP1; the interaction occurs in the presence of Dengue virus NS4B and induces lipophagy which facilitates production of virus progeny particles. Interacts with serine protease NS3. As to quaternary structure, homodimer. Interacts with host STAT2; this interaction inhibits the phosphorylation of the latter, and, when all viral proteins are present (polyprotein), targets STAT2 for degradation. Interacts with serine protease NS3. In terms of processing, specific enzymatic cleavages in vivo yield mature proteins. Cleavages in the lumen of endoplasmic reticulum are performed by host signal peptidase, whereas cleavages in the cytoplasmic side are performed by serine protease NS3. Signal cleavage at the 2K-4B site requires a prior NS3 protease-mediated cleavage at the 4A-2K site. Post-translationally, cleaved in post-Golgi vesicles by a host furin, releasing the mature small envelope protein M, and peptide pr. This cleavage is incomplete as up to 30% of viral particles still carry uncleaved prM. N-glycosylated. In terms of processing, N-glycosylated. The excreted form is glycosylated and this is required for efficient secretion of the protein from infected cells. Post-translationally, acetylated by host KAT5. Acetylation modulates NS3 RNA-binding and unwinding activities and plays an important positive role for viral replication. Sumoylation of RNA-directed RNA polymerase NS5 increases NS5 protein stability allowing proper viral RNA replication. In terms of processing, phosphorylated on serines residues. This phosphorylation may trigger NS5 nuclear localization.

It is found in the virion. The protein resides in the host nucleus. It localises to the host cytoplasm. The protein localises to the host perinuclear region. Its subcellular location is the secreted. It is found in the virion membrane. The protein resides in the host endoplasmic reticulum membrane. It localises to the host mitochondrion. The enzyme catalyses Selective hydrolysis of -Xaa-Xaa-|-Yaa- bonds in which each of the Xaa can be either Arg or Lys and Yaa can be either Ser or Ala.. The catalysed reaction is RNA(n) + a ribonucleoside 5'-triphosphate = RNA(n+1) + diphosphate. It catalyses the reaction a ribonucleoside 5'-triphosphate + H2O = a ribonucleoside 5'-diphosphate + phosphate + H(+). It carries out the reaction ATP + H2O = ADP + phosphate + H(+). The enzyme catalyses a 5'-end (5'-triphosphoguanosine)-ribonucleoside in mRNA + S-adenosyl-L-methionine = a 5'-end (N(7)-methyl 5'-triphosphoguanosine)-ribonucleoside in mRNA + S-adenosyl-L-homocysteine. The catalysed reaction is a 5'-end (N(7)-methyl 5'-triphosphoguanosine)-ribonucleoside in mRNA + S-adenosyl-L-methionine = a 5'-end (N(7)-methyl 5'-triphosphoguanosine)-(2'-O-methyl-ribonucleoside) in mRNA + S-adenosyl-L-homocysteine + H(+). In terms of biological role, plays a role in virus budding by binding to the cell membrane and gathering the viral RNA into a nucleocapsid that forms the core of a mature virus particle. During virus entry, may induce genome penetration into the host cytoplasm after hemifusion induced by the surface proteins. Can migrate to the cell nucleus where it modulates host functions. Overcomes the anti-viral effects of host EXOC1 by sequestering and degrading the latter through the proteasome degradation pathway. Inhibits RNA silencing by interfering with host Dicer. Its function is as follows. Prevents premature fusion activity of envelope proteins in trans-Golgi by binding to envelope protein E at pH6.0. After virion release in extracellular space, gets dissociated from E dimers. Functionally, acts as a chaperone for envelope protein E during intracellular virion assembly by masking and inactivating envelope protein E fusion peptide. prM is the only viral peptide matured by host furin in the trans-Golgi network probably to avoid catastrophic activation of the viral fusion activity in acidic Golgi compartment prior to virion release. prM-E cleavage is inefficient, and many virions are only partially matured. These uncleaved prM would play a role in immune evasion. In terms of biological role, may play a role in virus budding. Exerts cytotoxic effects by activating a mitochondrial apoptotic pathway through M ectodomain. May display a viroporin activity. Binds to host cell surface receptor and mediates fusion between viral and cellular membranes. Envelope protein is synthesized in the endoplasmic reticulum in the form of heterodimer with protein prM. They play a role in virion budding in the ER, and the newly formed immature particle is covered with 60 spikes composed of heterodimer between precursor prM and envelope protein E. The virion is transported to the Golgi apparatus where the low pH causes dissociation of PrM-E heterodimers and formation of E homodimers. prM-E cleavage is inefficient, and many virions are only partially matured. These uncleaved prM would play a role in immune evasion. Its function is as follows. Involved in immune evasion, pathogenesis and viral replication. Once cleaved off the polyprotein, is targeted to three destinations: the viral replication cycle, the plasma membrane and the extracellular compartment. Essential for viral replication. Required for formation of the replication complex and recruitment of other non-structural proteins to the ER-derived membrane structures. Excreted as a hexameric lipoparticle that plays a role against host immune response. Antagonizing the complement function. Binds to the host macrophages and dendritic cells. Inhibits signal transduction originating from Toll-like receptor 3 (TLR3). Functionally, disrupts the host endothelial glycocalyx layer of host pulmonary microvascular endothelial cells, inducing degradation of sialic acid and shedding of heparan sulfate proteoglycans. NS1 induces expression of sialidases, heparanase, and activates cathepsin L, which activates heparanase via enzymatic cleavage. These effects are probably linked to the endothelial hyperpermeability observed in severe dengue disease. In terms of biological role, component of the viral RNA replication complex that functions in virion assembly and antagonizes the host immune response. Required cofactor for the serine protease function of NS3. May have membrane-destabilizing activity and form viroporins. Its function is as follows. Displays three enzymatic activities: serine protease, NTPase and RNA helicase. NS3 serine protease, in association with NS2B, performs its autocleavage and cleaves the polyprotein at dibasic sites in the cytoplasm: C-prM, NS2A-NS2B, NS2B-NS3, NS3-NS4A, NS4A-2K and NS4B-NS5. NS3 RNA helicase binds RNA and unwinds dsRNA in the 3' to 5' direction. Functionally, regulates the ATPase activity of the NS3 helicase activity. NS4A allows NS3 helicase to conserve energy during unwinding. Plays a role in the inhibition of the host innate immune response. Interacts with host MAVS and thereby prevents the interaction between RIGI and MAVS. In turn, IFN-beta production is impaired. Interacts with host AUP1 which mediates induction of lipophagy in host cells and facilitates production of virus progeny particles. In terms of biological role, functions as a signal peptide for NS4B and is required for the interferon antagonism activity of the latter. Induces the formation of ER-derived membrane vesicles where the viral replication takes place. Inhibits interferon (IFN)-induced host STAT1 phosphorylation and nuclear translocation, thereby preventing the establishment of cellular antiviral state by blocking the IFN-alpha/beta pathway. Its function is as follows. Replicates the viral (+) and (-) RNA genome, and performs the capping of genomes in the cytoplasm. NS5 methylates viral RNA cap at guanine N-7 and ribose 2'-O positions. Besides its role in RNA genome replication, also prevents the establishment of cellular antiviral state by blocking the interferon-alpha/beta (IFN-alpha/beta) signaling pathway. Inhibits host TYK2 and STAT2 phosphorylation, thereby preventing activation of JAK-STAT signaling pathway. The polypeptide is Genome polyprotein (Dengue virus type 3 (strain China/80-2/1980) (DENV-3)).